The primary structure comprises 216 residues: Vacuolar iron transporter homolog 4 (216 aa).

The tract at residues 1–29 (MAATNGDAELTVAEEAKEEEEATDDGGGG) is disordered. The Cytoplasmic portion of the chain corresponds to 1–36 (MAATNGDAELTVAEEAKEEEEATDDGGGGVSSQWLR). Residues 37–57 (AAVLGASDGLVSTAALMLGIG) traverse the membrane as a helical segment. Topologically, residues 58–65 (AARPADAR) are vacuolar. A helical membrane pass occupies residues 66-86 (AVLLSGLAGLVAGACSMAIGE). Residues 87–134 (YVSVHVQLDVELADLERRRRRGGPAPAGLGLHAAAAAVSRPGQAAAAS) are Cytoplasmic-facing. The helical transmembrane segment at 135 to 155 (ALSFAAGAALPLLAAWFVAGA) threads the bilayer. The Vacuolar portion of the chain corresponds to 156–157 (YR). The chain crosses the membrane as a helical span at residues 158–178 (VRVVVVVATASLALAAFGAAG). The Cytoplasmic segment spans residues 179 to 190 (ARLGRAPGGRAG). The chain crosses the membrane as a helical span at residues 191 to 211 (LRVVVGGLLAMAATYGVMKLF). At 212-216 (RTHGV) the chain is on the vacuolar side.

It belongs to the CCC1 family.

Its subcellular location is the vacuole membrane. It catalyses the reaction Fe(2+)(in) = Fe(2+)(out). Its function is as follows. Probable vacuolar iron transporter that may be involved in the regulation of iron distribution throughout the plant. This is Vacuolar iron transporter homolog 4 from Oryza sativa subsp. japonica (Rice).